Consider the following 159-residue polypeptide: Small ribosomal subunit protein uS19 (159 aa).

Belongs to the universal ribosomal protein uS19 family.

In terms of biological role, protein S19 forms a complex with S13 that binds strongly to the 16S ribosomal RNA. In Pyrobaculum arsenaticum (strain DSM 13514 / JCM 11321 / PZ6), this protein is Small ribosomal subunit protein uS19.